A 645-amino-acid chain; its full sequence is 1,4-alpha-glucan branching enzyme GlgB (645 aa).

Aspartate 309 serves as the catalytic Nucleophile. Glutamate 352 acts as the Proton donor in catalysis. A disordered region spans residues 619–645 (VKTRKGSKKQDGSKTKVRSNVTSRGKR). The span at 636–645 (RSNVTSRGKR) shows a compositional bias: polar residues.

This sequence belongs to the glycosyl hydrolase 13 family. GlgB subfamily. Monomer.

The enzyme catalyses Transfers a segment of a (1-&gt;4)-alpha-D-glucan chain to a primary hydroxy group in a similar glucan chain.. Its pathway is glycan biosynthesis; glycogen biosynthesis. Catalyzes the formation of the alpha-1,6-glucosidic linkages in glycogen by scission of a 1,4-alpha-linked oligosaccharide from growing alpha-1,4-glucan chains and the subsequent attachment of the oligosaccharide to the alpha-1,6 position. In Bacillus mycoides (strain KBAB4) (Bacillus weihenstephanensis), this protein is 1,4-alpha-glucan branching enzyme GlgB.